A 192-amino-acid chain; its full sequence is GTP cyclohydrolase-2 (192 aa).

GTP is bound at residue 50-54 (RLHSE). Zn(2+) is bound by residues Cys55, Cys66, and Cys68. GTP-binding positions include 92-94 (EGR) and Thr114. Asp126 functions as the Proton acceptor in the catalytic mechanism. Residue Arg128 is the Nucleophile of the active site. GTP contacts are provided by Thr149 and Lys154.

It belongs to the GTP cyclohydrolase II family. Zn(2+) serves as cofactor.

The catalysed reaction is GTP + 4 H2O = 2,5-diamino-6-hydroxy-4-(5-phosphoribosylamino)-pyrimidine + formate + 2 phosphate + 3 H(+). It participates in cofactor biosynthesis; riboflavin biosynthesis; 5-amino-6-(D-ribitylamino)uracil from GTP: step 1/4. Functionally, catalyzes the conversion of GTP to 2,5-diamino-6-ribosylamino-4(3H)-pyrimidinone 5'-phosphate (DARP), formate and pyrophosphate. The polypeptide is GTP cyclohydrolase-2 (Helicobacter acinonychis (strain Sheeba)).